The following is a 73-amino-acid chain: Eukaryotic translation initiation factor 4 gamma 2 (73 aa).

Residues 1-70 enclose the W2 domain; the sequence is QVHCYNSNFP…ETAEEEESEE (70 aa).

Belongs to the eukaryotic initiation factor 4G family. As to quaternary structure, interacts with the serine/threonine protein kinases MKNK1 and MKNK2. Binds EIF4A and EIF3. Phosphorylation; hyperphosphorylated during mitosis.

In terms of biological role, appears to play a role in the switch from cap-dependent to IRES-mediated translation during mitosis, apoptosis and viral infection. Cleaved by some caspases and viral proteases. The chain is Eukaryotic translation initiation factor 4 gamma 2 (EIF4G2) from Gallus gallus (Chicken).